The primary structure comprises 576 residues: MLKYRTLSRSCHIFHPKSLSNNTLKSETTQELLQTVGFVRRSQVGLFQWLPLGLRSLNKVSNAIRNRMDSDGGAIEVSLSAISSKALWQATDRWNNSELFKLKDSKGKQYCLTATCEEDITDLMKNYIASYKDMPITIYQMTRKYRDEIRPRGGILRGREFLMKDAYSFASNEEDAFASFQKLDDTYNKIFKDLKIPFVSAWADSGDIGGEFSKEFHLIHESGEDTLMSCKHCGDISTLDMSQSYPEKDGQYSGDVDCKYALTKDHSTLICFYYPKDRQLNWNLALNAMDKDIDLTLRNKPNDHVLQVYEKDNEDIMFSKILRVMDCRLNSKSNFPDFPLKKYLKNNFGQISDVSIVDAQENEICGKCEEGRLEPLKSIEVGHIFLLGNKYSKPLNVKFVDKENKNETFVHMGCYGIGVSRLVGAIAELGRDSNGFRWPAIMAPYKVSICTGPNNPENSQRLQDVKSELLNDPTMQNLQNDILDQFNEKLGIGARIKLSHAMGIPLCVIVGSKSWPNVEIEVRGIRWGEKDLWRKQFEKRCSELQWKCTKNEHGIEKHTVPIQHLAEVIGVLLKDM.

Belongs to the class-II aminoacyl-tRNA synthetase family.

It localises to the mitochondrion. The enzyme catalyses tRNA(Pro) + L-proline + ATP = L-prolyl-tRNA(Pro) + AMP + diphosphate. The protein is Probable proline--tRNA ligase, mitochondrial (AIM10) of Saccharomyces cerevisiae (strain ATCC 204508 / S288c) (Baker's yeast).